Reading from the N-terminus, the 139-residue chain is Ribulose bisphosphate carboxylase small subunit (139 aa).

This sequence belongs to the RuBisCO small chain family. Heterohexadecamer of 8 large and 8 small subunits.

It is found in the plastid. Its subcellular location is the chloroplast. Its function is as follows. RuBisCO catalyzes two reactions: the carboxylation of D-ribulose 1,5-bisphosphate, the primary event in carbon dioxide fixation, as well as the oxidative fragmentation of the pentose substrate in the photorespiration process. Both reactions occur simultaneously and in competition at the same active site. Although the small subunit is not catalytic it is essential for maximal activity. The protein is Ribulose bisphosphate carboxylase small subunit of Chrysotila carterae (Marine alga).